The primary structure comprises 302 residues: Bifunctional protein FolD 2 (302 aa).

NADP(+)-binding positions include 170 to 172 (GRS), Ser-195, and Ile-236.

It belongs to the tetrahydrofolate dehydrogenase/cyclohydrolase family. As to quaternary structure, homodimer.

It carries out the reaction (6R)-5,10-methylene-5,6,7,8-tetrahydrofolate + NADP(+) = (6R)-5,10-methenyltetrahydrofolate + NADPH. The enzyme catalyses (6R)-5,10-methenyltetrahydrofolate + H2O = (6R)-10-formyltetrahydrofolate + H(+). It functions in the pathway one-carbon metabolism; tetrahydrofolate interconversion. Functionally, catalyzes the oxidation of 5,10-methylenetetrahydrofolate to 5,10-methenyltetrahydrofolate and then the hydrolysis of 5,10-methenyltetrahydrofolate to 10-formyltetrahydrofolate. This is Bifunctional protein FolD 2 from Paracoccus denitrificans (strain Pd 1222).